An 88-amino-acid polypeptide reads, in one-letter code: Small ribosomal subunit protein bS16 (88 aa).

It belongs to the bacterial ribosomal protein bS16 family.

This Mycoplasma pneumoniae (strain ATCC 29342 / M129 / Subtype 1) (Mycoplasmoides pneumoniae) protein is Small ribosomal subunit protein bS16.